We begin with the raw amino-acid sequence, 228 residues long: 2-C-methyl-D-erythritol 4-phosphate cytidylyltransferase (228 aa).

This sequence belongs to the IspD/TarI cytidylyltransferase family. IspD subfamily.

It catalyses the reaction 2-C-methyl-D-erythritol 4-phosphate + CTP + H(+) = 4-CDP-2-C-methyl-D-erythritol + diphosphate. It participates in isoprenoid biosynthesis; isopentenyl diphosphate biosynthesis via DXP pathway; isopentenyl diphosphate from 1-deoxy-D-xylulose 5-phosphate: step 2/6. Its function is as follows. Catalyzes the formation of 4-diphosphocytidyl-2-C-methyl-D-erythritol from CTP and 2-C-methyl-D-erythritol 4-phosphate (MEP). The polypeptide is 2-C-methyl-D-erythritol 4-phosphate cytidylyltransferase (Actinobacillus pleuropneumoniae serotype 5b (strain L20)).